The primary structure comprises 236 residues: ATP synthase subunit 4, mitochondrial (236 aa).

A mitochondrion-targeting transit peptide spans 1–29; it reads MAFRALTTKAAARPLLALGPRSVAMGARY.

Belongs to the eukaryotic ATPase subunit B family. In terms of assembly, F-type ATPases have 2 components, CF(1) - the catalytic core - and CF(0) - the membrane proton channel. In yeast, the dimeric form of ATP synthase consists of 17 polypeptides: alpha, beta, gamma, delta, epsilon, 4 (B), 5 (OSCP), 6 (A), 8, 9 (C), d, E (Tim11), f, g, h, i/j and k.

It is found in the mitochondrion. It localises to the mitochondrion inner membrane. Mitochondrial membrane ATP synthase (F(1)F(0) ATP synthase or Complex V) produces ATP from ADP in the presence of a proton gradient across the membrane which is generated by electron transport complexes of the respiratory chain. F-type ATPases consist of two structural domains, F(1) - containing the extramembraneous catalytic core, and F(0) - containing the membrane proton channel, linked together by a central stalk and a peripheral stalk. During catalysis, ATP synthesis in the catalytic domain of F(1) is coupled via a rotary mechanism of the central stalk subunits to proton translocation. Part of the complex F(0) domain and the peripheric stalk, which acts as a stator to hold the catalytic alpha(3)beta(3) subcomplex and subunit a/ATP6 static relative to the rotary elements. This Eremothecium gossypii (strain ATCC 10895 / CBS 109.51 / FGSC 9923 / NRRL Y-1056) (Yeast) protein is ATP synthase subunit 4, mitochondrial (ATP4).